Here is a 152-residue protein sequence, read N- to C-terminus: Transcriptional repressor NrdR (152 aa).

A zinc finger lies at 3 to 34 (CPACQHNGTRVLDSRPVDEGRSIRRRRECESC). One can recognise an ATP-cone domain in the interval 49–139 (LIVVKKEGIR…VYRQFKDINV (91 aa)).

Belongs to the NrdR family. Requires Zn(2+) as cofactor.

Negatively regulates transcription of bacterial ribonucleotide reductase nrd genes and operons by binding to NrdR-boxes. The sequence is that of Transcriptional repressor NrdR from Bacillus licheniformis (strain ATCC 14580 / DSM 13 / JCM 2505 / CCUG 7422 / NBRC 12200 / NCIMB 9375 / NCTC 10341 / NRRL NRS-1264 / Gibson 46).